The following is a 1578-amino-acid chain: FERM and PDZ domain-containing protein 1 (1578 aa).

The PDZ domain maps to 57 to 135; the sequence is TVKIDKDTLL…SLSITVVRCT (79 aa). The 316-residue stretch at 181-496 folds into the FERM domain; that stretch reads NVLKLYLENG…GYYRLLVDPV (316 aa). Disordered stretches follow at residues 555 to 616, 720 to 743, and 759 to 831; these read KEEQ…EEDD, SDSS…QGWT, and PLAF…VKKY. Over residues 720 to 729 the composition is skewed to polar residues; sequence SDSSESTASR. Residues 730–742 are compositionally biased toward low complexity; the sequence is QGGAPPAWGQQGW. Over residues 793–811 the composition is skewed to polar residues; that stretch reads AEPSATSLQNKASTSSPEN. Residues 822–831 are compositionally biased toward basic residues; that stretch reads PSRRGGVKKY. The segment at 924–931 is important for interaction with GPSM2; that stretch reads EPETMETK. Disordered stretches follow at residues 950–1030, 1070–1194, and 1347–1374; these read PNNK…LASN, KYTE…QGCQ, and PQPE…SAGS. A compositionally biased stretch (polar residues) spans 968-986; the sequence is TPHCSNPGSSGPDTAQARP. Positions 1100–1117 are enriched in basic and acidic residues; that stretch reads TKEEPQGQLSLERDREVT. Residues 1139–1150 show a composition bias toward polar residues; it reads DVSNNVSQTLDI.

In terms of assembly, interacts with GPSM1. Interacts with GPSM2 (via TPR repeat region).

The protein localises to the cytoplasm. It localises to the cytosol. It is found in the cell membrane. Functionally, stabilizes membrane-bound GPSM1, and thereby promotes its interaction with GNAI1. This chain is FERM and PDZ domain-containing protein 1 (FRMPD1), found in Homo sapiens (Human).